The sequence spans 90 residues: Leech factor Xa inhibitor (90 aa).

The protein localises to the secreted. In terms of biological role, potent anticoagulant inhibiting the amidolytic activity of factor Xa (F10) (Ki=4nM) and reducing its ability to activate prothrombin (F2) in the prothrombinase complex (EC(50)=40nM). This Haementeria depressa (Leech) protein is Leech factor Xa inhibitor.